We begin with the raw amino-acid sequence, 378 residues long: UPF0754 membrane protein Exig_0680 (378 aa).

Helical transmembrane passes span 5 to 25 (VDLV…GAVT) and 357 to 377 (ITWL…ILLI).

It belongs to the UPF0754 family.

Its subcellular location is the cell membrane. This is UPF0754 membrane protein Exig_0680 from Exiguobacterium sibiricum (strain DSM 17290 / CCUG 55495 / CIP 109462 / JCM 13490 / 255-15).